Here is a 228-residue protein sequence, read N- to C-terminus: Cytokinin riboside 5'-monophosphate phosphoribohydrolase LOG5 (228 aa).

Substrate-binding positions include E79, 97-98, and 114-120; these read RK and GYGTLEE.

This sequence belongs to the LOG family. In terms of tissue distribution, expressed in roots and shoots. Detected in vascular tissues of roots, cotyledons, and leaves, axillary buds, immature and mature flowers, fruit abscission zones and ovules.

The protein resides in the cytoplasm. Its subcellular location is the nucleus. It catalyses the reaction N(6)-(dimethylallyl)adenosine 5'-phosphate + H2O = N(6)-dimethylallyladenine + D-ribose 5-phosphate. The catalysed reaction is 9-ribosyl-trans-zeatin 5'-phosphate + H2O = trans-zeatin + D-ribose 5-phosphate. Functionally, cytokinin-activating enzyme working in the direct activation pathway. Phosphoribohydrolase that converts inactive cytokinin nucleotides to the biologically active free-base forms. The chain is Cytokinin riboside 5'-monophosphate phosphoribohydrolase LOG5 (LOG5) from Arabidopsis thaliana (Mouse-ear cress).